Reading from the N-terminus, the 154-residue chain is UPF0039 protein sll0451 (154 aa).

One can recognise an N-acetyltransferase domain in the interval 8–151 (QRFNDISGEA…EHISMIFRVP (144 aa)).

It belongs to the UPF0039 (ElaA) family.

This Synechocystis sp. (strain ATCC 27184 / PCC 6803 / Kazusa) protein is UPF0039 protein sll0451.